Consider the following 139-residue polypeptide: GATA transcription factor 16 (139 aa).

The GATA-type zinc finger occupies 32–86; the sequence is NDKKKTCADCGTSKTPLWRGGPVGPKSLCNACGIRNRKKRRGGTEDNKKLKKSSS. A disordered region spans residues 67–98; that stretch reads NRKKRRGGTEDNKKLKKSSSGGGNRKFGESLK.

It belongs to the type IV zinc-finger family. Class B subfamily.

The protein resides in the nucleus. In terms of biological role, transcriptional regulator that specifically binds 5'-GATA-3' or 5'-GAT-3' motifs within gene promoters. The sequence is that of GATA transcription factor 16 (GATA16) from Arabidopsis thaliana (Mouse-ear cress).